A 219-amino-acid polypeptide reads, in one-letter code: ATP phosphoribosyltransferase (219 aa).

This sequence belongs to the ATP phosphoribosyltransferase family. Short subfamily. As to quaternary structure, heteromultimer composed of HisG and HisZ subunits.

The protein resides in the cytoplasm. It carries out the reaction 1-(5-phospho-beta-D-ribosyl)-ATP + diphosphate = 5-phospho-alpha-D-ribose 1-diphosphate + ATP. The protein operates within amino-acid biosynthesis; L-histidine biosynthesis; L-histidine from 5-phospho-alpha-D-ribose 1-diphosphate: step 1/9. Functionally, catalyzes the condensation of ATP and 5-phosphoribose 1-diphosphate to form N'-(5'-phosphoribosyl)-ATP (PR-ATP). Has a crucial role in the pathway because the rate of histidine biosynthesis seems to be controlled primarily by regulation of HisG enzymatic activity. The polypeptide is ATP phosphoribosyltransferase (Paramagnetospirillum magneticum (strain ATCC 700264 / AMB-1) (Magnetospirillum magneticum)).